The chain runs to 444 residues: Protein-serine O-palmitoleoyltransferase porcupine (444 aa).

Transmembrane regions (helical) follow at residues 29–49, 81–101, 128–150, 163–183, 201–221, 249–269, 304–324, 326–346, 383–403, and 420–440; these read NGTLLTLLQMLVLVWMFFLVW, VMIFHTFSLISLFCAVQKLNG, FLTLRGVLMMHIMRLSTASFAIV, TLYLEYIYFPPFIIFGPYVTF, LGVFVQGSVLIFIGITLAIIS, YFICLSTQAFAMFLGSKIVVA, FFQSTALNVLLTFAVSALLHA, DYQMWLTLLALGFIAYSETVF, VLIINLFFMILSMYHLVFTGM, and WTIWGTHYYSSFIVSFAFLAL. His323 is an active-site residue.

This sequence belongs to the membrane-bound acyltransferase family. Porcupine subfamily.

The protein resides in the membrane. It carries out the reaction [Wnt protein]-L-serine + (9Z)-hexadecenoyl-CoA = [Wnt protein]-O-(9Z)-hexadecenoyl-L-serine + CoA. Key regulator of the Wnt signaling pathway that mediates lipid modification of Wnt proteins. Acts as a protein-serine O-palmitoleoyltransferase that catalyzes the attachment of palmitoleate, a 16-carbon monounsaturated fatty acid (C16:1(9Z)), to Wnt proteins. Serine palmitoleoylation of WNT proteins is required for efficient binding to frizzled receptors. Has a role in cell specification, specifically in blastomere signaling. Involved in cytosketetal polarity. Required for the orientation of mitotic spindle axis. This chain is Protein-serine O-palmitoleoyltransferase porcupine, found in Caenorhabditis briggsae.